A 152-amino-acid polypeptide reads, in one-letter code: Small ribosomal subunit protein uS15 (152 aa).

Belongs to the universal ribosomal protein uS15 family. As to quaternary structure, part of the 30S ribosomal subunit.

The polypeptide is Small ribosomal subunit protein uS15 (Saccharolobus solfataricus (strain ATCC 35092 / DSM 1617 / JCM 11322 / P2) (Sulfolobus solfataricus)).